We begin with the raw amino-acid sequence, 147 residues long: D-aminoacyl-tRNA deacylase (147 aa).

The short motif at 138–139 is the Gly-cisPro motif, important for rejection of L-amino acids element; it reads GP.

This sequence belongs to the DTD family. As to quaternary structure, homodimer.

It localises to the cytoplasm. It catalyses the reaction glycyl-tRNA(Ala) + H2O = tRNA(Ala) + glycine + H(+). The catalysed reaction is a D-aminoacyl-tRNA + H2O = a tRNA + a D-alpha-amino acid + H(+). Functionally, an aminoacyl-tRNA editing enzyme that deacylates mischarged D-aminoacyl-tRNAs. Also deacylates mischarged glycyl-tRNA(Ala), protecting cells against glycine mischarging by AlaRS. Acts via tRNA-based rather than protein-based catalysis; rejects L-amino acids rather than detecting D-amino acids in the active site. By recycling D-aminoacyl-tRNA to D-amino acids and free tRNA molecules, this enzyme counteracts the toxicity associated with the formation of D-aminoacyl-tRNA entities in vivo and helps enforce protein L-homochirality. The sequence is that of D-aminoacyl-tRNA deacylase from Prosthecochloris aestuarii (strain DSM 271 / SK 413).